The sequence spans 238 residues: uncharacterized protein (238 aa).

It belongs to the chlamydial CPn_0658/CT_538/TC_0825 family.

This is an uncharacterized protein from Chlamydia trachomatis serovar D (strain ATCC VR-885 / DSM 19411 / UW-3/Cx).